Here is a 1101-residue protein sequence, read N- to C-terminus: Rho GTPase-activating protein 30 (1101 aa).

Positions C20–F215 constitute a Rho-GAP domain. 3 disordered regions span residues E224–D243, H300–G400, and A451–G529. Over residues R308–N318 the composition is skewed to basic and acidic residues. The segment covering L360–A376 has biased composition (acidic residues). Positions A459 to P472 are enriched in pro residues. A compositionally biased stretch (low complexity) spans D508–E520. At S576 the chain carries Phosphoserine. Disordered stretches follow at residues G621–P906 and C965–N991. 4 stretches are compositionally biased toward basic and acidic residues: residues G658 to E694, T701 to E735, E759 to E770, and A779 to S822. Positions G976–N991 are enriched in low complexity. A Phosphoserine modification is found at S996. The disordered stretch occupies residues L1050–L1101. The span at P1053–P1069 shows a compositional bias: low complexity. Positions L1080–N1094 are enriched in polar residues.

As to quaternary structure, interacts with RHOU in a GTP-independent manner.

It localises to the cytoplasmic vesicle. Functionally, GTPase-activating protein (GAP) for RAC1 and RHOA, but not for CDC42. The sequence is that of Rho GTPase-activating protein 30 (ARHGAP30) from Homo sapiens (Human).